The following is a 163-amino-acid chain: Phosphopantetheine adenylyltransferase (163 aa).

Substrate is bound at residue Thr10. ATP is bound by residues 10–11 and His18; that span reads TF. 3 residues coordinate substrate: Lys42, Leu74, and Arg88. ATP contacts are provided by residues 89–91, Glu99, and 124–130; these read GLR and NSFISST.

This sequence belongs to the bacterial CoaD family. As to quaternary structure, homohexamer. It depends on Mg(2+) as a cofactor.

It localises to the cytoplasm. It catalyses the reaction (R)-4'-phosphopantetheine + ATP + H(+) = 3'-dephospho-CoA + diphosphate. It functions in the pathway cofactor biosynthesis; coenzyme A biosynthesis; CoA from (R)-pantothenate: step 4/5. In terms of biological role, reversibly transfers an adenylyl group from ATP to 4'-phosphopantetheine, yielding dephospho-CoA (dPCoA) and pyrophosphate. This Shewanella oneidensis (strain ATCC 700550 / JCM 31522 / CIP 106686 / LMG 19005 / NCIMB 14063 / MR-1) protein is Phosphopantetheine adenylyltransferase.